The sequence spans 402 residues: Phosphoglycerate kinase (402 aa).

Residues 29 to 31 (DFN), arginine 45, 69 to 72 (HLGR), arginine 125, and arginine 158 each bind substrate. ATP contacts are provided by residues lysine 209, glutamate 331, and 357–360 (GGDT).

It belongs to the phosphoglycerate kinase family.

Its subcellular location is the cytoplasm. It carries out the reaction (2R)-3-phosphoglycerate + ATP = (2R)-3-phospho-glyceroyl phosphate + ADP. It participates in carbohydrate degradation; glycolysis; pyruvate from D-glyceraldehyde 3-phosphate: step 2/5. In Helicobacter pylori (strain ATCC 700392 / 26695) (Campylobacter pylori), this protein is Phosphoglycerate kinase (pgk).